The primary structure comprises 338 residues: Cytochrome c biogenesis protein CcsA (338 aa).

The next 8 membrane-spanning stretches (helical) occupy residues 15–35 (FLVLFLTMLLYWGGAAFPNIP), 36–56 (GLTGLGTLGVAIANLCMATLL), 71–91 (LYESLFFLAWGVTTMHLVAEW), 97–117 (WVGVITAPVAMGITAFAALSL), 142–162 (VMMISYAALLVGSLLAIAFLI), 246–266 (IIGLGFPLLTIGIIAGAVWAN), 273–293 (WSWDPKETWALITWLVFAAYL), and 307–327 (AFLAAAGFFVVWVCYLGVNIL).

This sequence belongs to the CcmF/CycK/Ccl1/NrfE/CcsA family. May interact with ccs1.

It localises to the cellular thylakoid membrane. Required during biogenesis of c-type cytochromes (cytochrome c6 and cytochrome f) at the step of heme attachment. This chain is Cytochrome c biogenesis protein CcsA, found in Picosynechococcus sp. (strain ATCC 27264 / PCC 7002 / PR-6) (Agmenellum quadruplicatum).